Consider the following 144-residue polypeptide: Large ribosomal subunit protein uL14 (144 aa).

The protein belongs to the universal ribosomal protein uL14 family. As to quaternary structure, part of the 50S ribosomal subunit. Forms a cluster with proteins L3 and L24e, part of which may contact the 16S rRNA in 2 intersubunit bridges.

Its function is as follows. Binds to 23S rRNA. Forms part of two intersubunit bridges in the 70S ribosome. The protein is Large ribosomal subunit protein uL14 of Pyrobaculum arsenaticum (strain DSM 13514 / JCM 11321 / PZ6).